We begin with the raw amino-acid sequence, 204 residues long: Methylthioribulose-1-phosphate dehydratase (204 aa).

Residues H94 and H96 each contribute to the Zn(2+) site.

It belongs to the aldolase class II family. MtnB subfamily. Zn(2+) is required as a cofactor.

It catalyses the reaction 5-(methylsulfanyl)-D-ribulose 1-phosphate = 5-methylsulfanyl-2,3-dioxopentyl phosphate + H2O. Its pathway is amino-acid biosynthesis; L-methionine biosynthesis via salvage pathway; L-methionine from S-methyl-5-thio-alpha-D-ribose 1-phosphate: step 2/6. Its function is as follows. Catalyzes the dehydration of methylthioribulose-1-phosphate (MTRu-1-P) into 2,3-diketo-5-methylthiopentyl-1-phosphate (DK-MTP-1-P). This is Methylthioribulose-1-phosphate dehydratase from Citrobacter koseri (strain ATCC BAA-895 / CDC 4225-83 / SGSC4696).